Consider the following 474-residue polypeptide: UDP-N-acetylmuramate--L-alanine ligase (474 aa).

ATP is bound at residue 122-128 (GTHGKTT).

The protein belongs to the MurCDEF family.

It localises to the cytoplasm. The enzyme catalyses UDP-N-acetyl-alpha-D-muramate + L-alanine + ATP = UDP-N-acetyl-alpha-D-muramoyl-L-alanine + ADP + phosphate + H(+). Its pathway is cell wall biogenesis; peptidoglycan biosynthesis. Its function is as follows. Cell wall formation. This chain is UDP-N-acetylmuramate--L-alanine ligase, found in Saccharophagus degradans (strain 2-40 / ATCC 43961 / DSM 17024).